The following is a 113-amino-acid chain: U11-theraphotoxin-Hhn1m (113 aa).

The first 21 residues, 1–21, serve as a signal peptide directing secretion; the sequence is MNTVRGTFLLVFGLAASLGQA. A propeptide spanning residues 22–74 is cleaved from the precursor; sequence DKNENRREMQKKTEQGKSYLNFAENLLLQKLEELEAKLLEKHSKKSKNSRQKR. 3 cysteine pairs are disulfide-bonded: Cys75–Cys90, Cys82–Cys95, and Cys89–Cys110.

The protein belongs to the neurotoxin 14 (magi-1) family. 01 (HNTX-16) subfamily. As to expression, expressed by the venom gland.

It localises to the secreted. In terms of biological role, probable ion channel inhibitor. This is U11-theraphotoxin-Hhn1m from Cyriopagopus hainanus (Chinese bird spider).